The chain runs to 247 residues: UDP-2,3-diacylglucosamine hydrolase (247 aa).

The Mn(2+) site is built by Asp8, His10, Asp41, Asn79, and His114. 79–80 (NR) serves as a coordination point for substrate. Asp122, Ser160, Asp171, Gln174, and His202 together coordinate substrate. Residues His202 and His204 each contribute to the Mn(2+) site.

Belongs to the LpxH family. Mn(2+) is required as a cofactor.

The protein localises to the cell inner membrane. The catalysed reaction is UDP-2-N,3-O-bis[(3R)-3-hydroxytetradecanoyl]-alpha-D-glucosamine + H2O = 2-N,3-O-bis[(3R)-3-hydroxytetradecanoyl]-alpha-D-glucosaminyl 1-phosphate + UMP + 2 H(+). It participates in glycolipid biosynthesis; lipid IV(A) biosynthesis; lipid IV(A) from (3R)-3-hydroxytetradecanoyl-[acyl-carrier-protein] and UDP-N-acetyl-alpha-D-glucosamine: step 4/6. Its function is as follows. Hydrolyzes the pyrophosphate bond of UDP-2,3-diacylglucosamine to yield 2,3-diacylglucosamine 1-phosphate (lipid X) and UMP by catalyzing the attack of water at the alpha-P atom. Involved in the biosynthesis of lipid A, a phosphorylated glycolipid that anchors the lipopolysaccharide to the outer membrane of the cell. This Xanthomonas campestris pv. campestris (strain B100) protein is UDP-2,3-diacylglucosamine hydrolase.